The chain runs to 107 residues: MTEKKNRREKKNPREAKVTFEGLVTEALPNGMFRVRLENDTIILGYISGKIRSSSIRILMGDRVKIEVSRYDSSKGRIIYRLPHKDSKRTEDSKDTEDLKDTKDSKD.

The region spanning 8 to 83 (REKKNPREAK…SKGRIIYRLP (76 aa)) is the S1-like domain. A disordered region spans residues 81 to 107 (RLPHKDSKRTEDSKDTEDLKDTKDSKD). Residues 83 to 107 (PHKDSKRTEDSKDTEDLKDTKDSKD) are compositionally biased toward basic and acidic residues.

Belongs to the IF-1 family. As to quaternary structure, component of the 30S ribosomal translation pre-initiation complex which assembles on the 30S ribosome in the order IF-2 and IF-3, IF-1 and N-formylmethionyl-tRNA(fMet); mRNA recruitment can occur at any time during PIC assembly.

The protein resides in the plastid. The protein localises to the chloroplast. One of the essential components for the initiation of protein synthesis. Stabilizes the binding of IF-2 and IF-3 on the 30S subunit to which N-formylmethionyl-tRNA(fMet) subsequently binds. Helps modulate mRNA selection, yielding the 30S pre-initiation complex (PIC). Upon addition of the 50S ribosomal subunit IF-1, IF-2 and IF-3 are released leaving the mature 70S translation initiation complex. This chain is Translation initiation factor IF-1, chloroplastic, found in Saccharum hybrid (Sugarcane).